A 244-amino-acid polypeptide reads, in one-letter code: tRNA (guanine-N(1)-)-methyltransferase (244 aa).

S-adenosyl-L-methionine contacts are provided by residues G112 and 131–136 (LGDFIL). A disordered region spans residues 211–244 (IKRTSDRRPDLLEKWQQEKKPGSREQGSREQGEK).

Belongs to the RNA methyltransferase TrmD family. Homodimer.

It is found in the cytoplasm. The enzyme catalyses guanosine(37) in tRNA + S-adenosyl-L-methionine = N(1)-methylguanosine(37) in tRNA + S-adenosyl-L-homocysteine + H(+). In terms of biological role, specifically methylates guanosine-37 in various tRNAs. The chain is tRNA (guanine-N(1)-)-methyltransferase from Trichormus variabilis (strain ATCC 29413 / PCC 7937) (Anabaena variabilis).